The primary structure comprises 337 residues: Mitochondrial glutathione transporter SLC25A40 (337 aa).

3 Solcar repeats span residues 14–132, 140–224, and 234–328; these read VTPL…LSTF, NETR…LRRW, and STFM…GKGF. 6 helical membrane-spanning segments follow: residues 20 to 40, 104 to 124, 146 to 166, 200 to 221, 240 to 260, and 299 to 319; these read MMAS…LDVV, LWSG…IYFT, IVAG…LELI, WAPT…YENL, FTAG…FDVV, and GLFT…AIMI.

The protein belongs to the mitochondrial carrier (TC 2.A.29) family. In terms of tissue distribution, widely expressed at low level.

The protein resides in the mitochondrion inner membrane. The enzyme catalyses glutathione(in) = glutathione(out). Probable mitochondrial transporter required for glutathione import into mitochondria. Glutathione, which plays key roles in oxidative metabolism, is produced exclusively in the cytosol and is imported in many organelles. Mitochondrial glutathione is required for the activity and stability of proteins containing iron-sulfur clusters, as well as erythropoiesis. This is Mitochondrial glutathione transporter SLC25A40 from Rattus norvegicus (Rat).